A 140-amino-acid polypeptide reads, in one-letter code: RxLR effector protein Avh23 (140 aa).

The signal sequence occupies residues 1–21; it reads MRLTYFLTVIVVATLHAGGTA. The RxLR-dEER motif lies at 54–72; sequence RMLRKVKEDTVSKKDHEER. One copy of the ADA2-binding IR1 repeat lies at 100 to 113; that stretch reads QGAFQRQNAFVNRD. Residues 114–127 form an ADA2-binding IR2 repeat; it reads QGAFQRQNAFVKRA.

The protein belongs to the RxLR effector family. Interacts with host histone acetyl transferase SAGA complex subunit ADA2.

The protein resides in the secreted. Its subcellular location is the host nucleus. The protein localises to the host cytoplasm. Functionally, effector that suppresses plant defense responses during the early stages of pathogen infection. Suppresses cell death induced by effectors and PAMPs in plant hosts. Acts as a modulator of histone acetyltransferase (HAT) in plants. Avh23 binds to the ADA2 subunit of the HAT complex SAGA and disrupts its assembly by interfering with the association of ADA2 with the catalytic subunit GCN5. As such, Avh23 suppresses H3K9 acetylation mediated by the ADA2/GCN5 module and increases plant susceptibility. The chain is RxLR effector protein Avh23 from Phytophthora sojae (Soybean stem and root rot agent).